The chain runs to 298 residues: Protein ABIL1 (298 aa).

This sequence belongs to the ABI family. In terms of assembly, binds SCAR2. Expressed in seedlings, roots, hypocotyls, cotyledons, leaves, stems, and flowers.

It localises to the cytoplasm. The protein localises to the cytoskeleton. In terms of biological role, involved in regulation of actin and microtubule organization. Part of a WAVE complex that activates the Arp2/3 complex. The chain is Protein ABIL1 (ABIL1) from Arabidopsis thaliana (Mouse-ear cress).